The sequence spans 416 residues: Ena/VASP-like protein (416 aa).

Residues 1-112 (MSEQSICQAR…NAMLFALNIM (112 aa)) form the WH1 domain. Over residues 114-129 (SQEGGPSSQRQVQNGP) the composition is skewed to polar residues. Disordered stretches follow at residues 114 to 133 (SQEGGPSSQRQVQNGPSPDE) and 141 to 369 (VMEQ…PAGS). A Phosphoserine modification is found at Ser-130. The span at 141–157 (VMEQHQQQRQESLERRT) shows a compositional bias: basic and acidic residues. Low complexity predominate over residues 169–180 (PSSAASAPVSCS). Pro residues predominate over residues 181 to 206 (GPPPPPPPPVPPPPTGATPPPPPPLP). Positions 222–242 (GLAAAIAGAKLRRVQRPEDAS) are EVH2 block A. The tract at residues 222–413 (GLAAAIAGAK…DAIRQELSGI (192 aa)) is EVH2. A KLKR motif is present at residues 231–234 (KLRR). The segment covering 242–253 (SGGSSPSGTSKS) has biased composition (low complexity). Phosphoserine is present on residues Ser-246 and Ser-259. Residues 265 to 282 (GGLMEEMNKLLAKRRKAA) form an EVH2 block B region. Positions 299–320 (EDPSTSPSPGTRAASQPPNSSE) are enriched in polar residues. Phosphoserine occurs at positions 304, 306, 329, 331, 341, 349, 354, and 369. A compositionally biased stretch (basic and acidic residues) spans 321–331 (AGRKPWERSNS). The interval 342-362 (RTPSVAKSPEAKSPLQSQPHS) is required for interaction with ZDHHC17. The tract at residues 379–413 (DLDRMKQEILEEVVRELHKVKEEIIDAIRQELSGI) is EVH2 block C.

This sequence belongs to the Ena/VASP family. Homotetramer. Binds to the SH3 domains of ABL1, LYN and SRC. Also binds to profilin, with preference for isoform IIa of PFN2, and the WW domain of APBB1/FE65. Binds to SEMA6A. Interacts, via the Pro-rich region, with the C-terminal SH3 domain of DNMBP. Interacts with RAPH1. Binds, via the EVH1 domain, the Pro-rich domain of Listeria monocytogenes actA. Binds, via the EVH1 domain, the Pro-rich domain of ZYX. Interacts with FYB1. Interacts with ZDHHC17. In terms of processing, phosphorylated by PKA; phosphorylation abolishes binding to SH3 domains of ABL and SRC.

The protein resides in the cytoplasm. It localises to the cytoskeleton. The protein localises to the stress fiber. Its subcellular location is the cell projection. It is found in the lamellipodium. In terms of biological role, ena/VASP proteins are actin-associated proteins involved in a range of processes dependent on cytoskeleton remodeling and cell polarity such as axon guidance and lamellipodial and filopodial dynamics in migrating cells. EVL enhances actin nucleation and polymerization. This chain is Ena/VASP-like protein (EVL), found in Homo sapiens (Human).